Consider the following 794-residue polypeptide: MNIDDKLEGLFLKCGGIDEMQSSRTMVVMGGVSGQSTVSGELQDSVLQDRSMPHQEILAADEVLQESEMRQQDMISHDELMVHEETVKNDEEQMETHERLPQGLQYALNVPISVKQEITFTDVSEQLMRDKKQIREPVDLQKKKKRKQRSPAKILTINEDGSLGLKTPKSHVCEHCNAAFRTNYHLQRHVFIHTGEKPFQCSQCDMRFIQKYLLQRHEKIHTGEKPFRCDECGMRFIQKYHMERHKRTHSGEKPYQCEYCLQYFSRTDRVLKHKRMCHENHDKKLNRCAIKGGLLTSEEDSGFSTSPKDNSLPKKKRQKTEKKSSGMDKESALDKSDLKKDKNDYLPLYSSSTKVKDGYMVAEYAVEMPHSSVGGSHLEDASGEIHPPKLVLKKINSKRSLKQPLEQNQTISPLTTYEESKVSKYAFELVDKQALLDSEGNADIDQVDNLQEGPSKPVHSSTNYDDAMQFLKKKRYLQAASNNSREYALNVGTIASQPSVTQAAVASVIDESTTASILESQALNVEIKSNHDKNVIPDEVLQTLLDHYSHKANGQHEISFSVADTEVTSSISINSSEVPEVTPSENVGSSSQASSSDKANMLQEYSKFLQQALDRTSQNDAYLNSPSLNFVTDNQTLPNQPAFSSTDKQVYATMPINSFRSGMNSPLRTTPDKSHFGLIVGDSQHSFPFSGDETNHASATSTQDFLDQVTSQKKAEAQPVHQAYQMSSFEQPFRAPYHGSRAGIATQFSTANGQVNLRGPGTSAEFSEFPLVNVNDSRAGMTSSPDATTGQTFG.

Lysine 6 is covalently cross-linked (Glycyl lysine isopeptide (Lys-Gly) (interchain with G-Cter in SUMO2)). Serine 51 carries the phosphoserine modification. Residues lysine 88, lysine 115, and lysine 132 each participate in a glycyl lysine isopeptide (Lys-Gly) (interchain with G-Cter in SUMO2) cross-link. A C2H2-type 1 zinc finger spans residues 171-193 (HVCEHCNAAFRTNYHLQRHVFIH). Position 194 is a phosphothreonine (threonine 194). 2 consecutive C2H2-type zinc fingers follow at residues 199–221 (FQCS…EKIH) and 227–249 (FRCD…KRTH). Serine 250 is modified (phosphoserine). The segment at 255–278 (YQCEYCLQYFSRTDRVLKHKRMCH) adopts a C2H2-type 4 zinc-finger fold. Lysine 291 is covalently cross-linked (Glycyl lysine isopeptide (Lys-Gly) (interchain with G-Cter in SUMO2)). Residues 298–336 (EEDSGFSTSPKDNSLPKKKRQKTEKKSSGMDKESALDKS) form a disordered region. A phosphoserine mark is found at serine 301 and serine 306. Lysine 308 is covalently cross-linked (Glycyl lysine isopeptide (Lys-Gly) (interchain with G-Cter in SUMO2)). A compositionally biased stretch (basic and acidic residues) spans 321-336 (EKKSSGMDKESALDKS). Residue lysine 356 forms a Glycyl lysine isopeptide (Lys-Gly) (interchain with G-Cter in SUMO1); alternate linkage. Lysine 356 participates in a covalent cross-link: Glycyl lysine isopeptide (Lys-Gly) (interchain with G-Cter in SUMO2); alternate. Residue lysine 402 forms a Glycyl lysine isopeptide (Lys-Gly) (interchain with G-Cter in SUMO2) linkage. Phosphoserine is present on serine 412. Residues lysine 421 and lysine 424 each participate in a glycyl lysine isopeptide (Lys-Gly) (interchain with G-Cter in SUMO2) cross-link. Residues 574–588 (NSSEVPEVTPSENVG) show a composition bias toward polar residues. Residues 574-599 (NSSEVPEVTPSENVGSSSQASSSDKA) form a disordered region. Position 607 is an N6-acetyllysine (lysine 607). Residues serine 665 and serine 784 each carry the phosphoserine modification.

This sequence belongs to the krueppel C2H2-type zinc-finger protein family. Interacts with HNRNPDL. Interacts with the 5FMC complex; the interaction requires association with CHTOP. Interacts with CAVIN1. Post-translationally, sumoylated with SUMO2. Desumoylated by SENP3, resulting in the stimulation of transcription of its target genes.

It localises to the nucleus. In terms of biological role, involved in transcriptional regulation. Represses the transcription of a number of genes including gastrin, stromelysin and enolase. Binds to the G-rich box in the enhancer region of these genes. The chain is Zinc finger protein 148 (ZNF148) from Pongo abelii (Sumatran orangutan).